A 424-amino-acid chain; its full sequence is 3-ketoacyl-CoA thiolase B, peroxisomal (424 aa).

Residues 1–26 (MHRLQVVLGHLAGRSESSSALQAAPC) constitute a peroxisome transit peptide. The tract at residues 1 to 26 (MHRLQVVLGHLAGRSESSSALQAAPC) is PTS2-type peroxisomal targeting signal. The active-site Acyl-thioester intermediate is the C123. An N6-acetyllysine mark is found at K173 and K234. CoA contacts are provided by R249, T252, and S276. C408 (proton donor/acceptor) is an active-site residue.

It belongs to the thiolase-like superfamily. Thiolase family. Homodimer. Interacts (via PTS2-type peroxisomal targeting signal region) with PEX7; leading to its translocation into peroxisomes.

The protein localises to the peroxisome. It carries out the reaction an acyl-CoA + acetyl-CoA = a 3-oxoacyl-CoA + CoA. The catalysed reaction is 2 acetyl-CoA = acetoacetyl-CoA + CoA. It catalyses the reaction hexanoyl-CoA + acetyl-CoA = 3-oxooctanoyl-CoA + CoA. The enzyme catalyses tetradecanoyl-CoA + acetyl-CoA = 3-oxohexadecanoyl-CoA + CoA. It carries out the reaction 3-oxohexadecanedioyl-CoA + CoA = tetradecanedioyl-CoA + acetyl-CoA. The catalysed reaction is 3-oxo-(6Z,9Z,12Z,15Z,18Z,21Z)-tetracosahexaenoyl-CoA + CoA = (4Z,7Z,10Z,13Z,16Z,19Z)-docosahexaenoyl-CoA + acetyl-CoA. The protein operates within lipid metabolism; peroxisomal fatty acid beta-oxidation. Responsible for the thiolytic cleavage of straight chain 3-keto fatty acyl-CoAs (3-oxoacyl-CoAs). Plays an important role in fatty acid peroxisomal beta-oxidation. Catalyzes the cleavage of short, medium, long, and very long straight chain 3-oxoacyl-CoAs. Medium chain straight 3-oxoacyl-CoAs are preferred substrates. In Rattus norvegicus (Rat), this protein is 3-ketoacyl-CoA thiolase B, peroxisomal.